Reading from the N-terminus, the 384-residue chain is PqqA peptide cyclase (384 aa).

The 216-residue stretch at Val-5–Ala-220 folds into the Radical SAM core domain. [4Fe-4S] cluster-binding residues include Cys-19, Cys-23, and Cys-26.

The protein belongs to the radical SAM superfamily. PqqE family. As to quaternary structure, interacts with PqqD. The interaction is necessary for activity of PqqE. [4Fe-4S] cluster serves as cofactor.

The enzyme catalyses [PQQ precursor protein] + S-adenosyl-L-methionine = E-Y cross-linked-[PQQ precursor protein] + 5'-deoxyadenosine + L-methionine + H(+). Its pathway is cofactor biosynthesis; pyrroloquinoline quinone biosynthesis. Catalyzes the cross-linking of a glutamate residue and a tyrosine residue in the PqqA protein as part of the biosynthesis of pyrroloquinoline quinone (PQQ). This is PqqA peptide cyclase from Acinetobacter baumannii (strain AB0057).